A 121-amino-acid chain; its full sequence is Chronic lymphocytic leukemia up-regulated protein 1 (121 aa).

As to expression, specifically expressed in chronic lymphocytic leukemia (CLL) cells from patients without immunoglobulin heavy-chain hypermutations. Expression is detected in all CLL cells and levels are similar in patients before and after treatment.

The protein resides in the cytoplasm. The sequence is that of Chronic lymphocytic leukemia up-regulated protein 1 (CLLU1) from Homo sapiens (Human).